The primary structure comprises 309 residues: F-box/LRR-repeat protein At3g48880 (309 aa).

Residues 10–57 form the F-box domain; it reads LRRWEELDTDILVRIFQKFSVFELTSGLAHVCRGWRAACCDPILWKTV. LRR repeat units follow at residues 77 to 107, 108 to 133, 159 to 184, and 208 to 233; these read VERRSDEALTRILKLSMNLSGGSTRTLIFHF, NLFLSDDQLTYTAERCPGLRRVVLPA, SIANPPYLLTEIAKNCKNFKELKIMG, and CSAIKREALMKILDGLPSLEVLNISH.

The polypeptide is F-box/LRR-repeat protein At3g48880 (Arabidopsis thaliana (Mouse-ear cress)).